Here is a 376-residue protein sequence, read N- to C-terminus: Transcription initiation factor IIA subunit 1 (376 aa).

Alanine 2 bears the N-acetylalanine mark. Low complexity-rich tracts occupy residues 69–79 (QVQQQHQPQQQ) and 89–105 (QAQP…TQQV). 3 disordered regions span residues 69 to 107 (QVQQ…QVLI), 246 to 265 (AQAQ…PAQT), and 274 to 329 (DGTG…QELF). Residues serine 280, serine 281, serine 316, and serine 321 each carry the phosphoserine; by TAF1 modification. Positions 280 to 329 (SSEEDEDEEEDYDDDEEEDKEKDGAEDGQVEEEPLNSEDDVSDEEGQELF) are enriched in acidic residues. DNA contacts are provided by histidine 343 and arginine 344.

This sequence belongs to the TFIIA subunit 1 family. TFIIA is a heterodimer of the large unprocessed subunit 1 and a small subunit gamma. It was originally believed to be a heterotrimer of an alpha (p35), a beta (p19) and a gamma subunit (p12). TFIIA forms a complex with TBP. Part of TBP-based Pol II pre-initiation complex (PIC), in which Pol II core assembles with general transcription factors and other specific initiation factors including GTF2E1, GTF2E2, GTF2F1, GTF2F2, TCEA1, ERCC2, ERCC3, GTF2H2, GTF2H3, GTF2H4, GTF2H5, GTF2A1, GTF2A2, GTF2B and TBP; this large multi-subunit PIC complex mediates DNA unwinding and targets Pol II core to the transcription start site where the first phosphodiester bond forms. The alpha and beta subunits are postranslationally produced from the precursor formby TASP1. The cleavage promotes proteasomal degradation.

The protein resides in the nucleus. Its function is as follows. TFIIA is a component of the transcription machinery of RNA polymerase II and plays an important role in transcriptional activation. TFIIA in a complex with TBP mediates transcriptional activity. The sequence is that of Transcription initiation factor IIA subunit 1 (GTF2A1) from Pongo abelii (Sumatran orangutan).